Consider the following 201-residue polypeptide: tRNA (guanine-N(7)-)-methyltransferase (201 aa).

S-adenosyl-L-methionine-binding residues include Glu-34, Glu-59, Asp-86, and Asp-107. Asp-107 is an active-site residue. Substrate contacts are provided by residues Lys-111, Asp-143, and 181 to 184 (TDYE).

The protein belongs to the class I-like SAM-binding methyltransferase superfamily. TrmB family.

The catalysed reaction is guanosine(46) in tRNA + S-adenosyl-L-methionine = N(7)-methylguanosine(46) in tRNA + S-adenosyl-L-homocysteine. The protein operates within tRNA modification; N(7)-methylguanine-tRNA biosynthesis. In terms of biological role, catalyzes the formation of N(7)-methylguanine at position 46 (m7G46) in tRNA. The sequence is that of tRNA (guanine-N(7)-)-methyltransferase from Mycoplasma mobile (strain ATCC 43663 / 163K / NCTC 11711) (Mesomycoplasma mobile).